A 428-amino-acid polypeptide reads, in one-letter code: U2 small nuclear ribonucleoprotein auxiliary factor 35 kDa subunit-related protein 2-like (428 aa).

The segment at Met1–Ala51 is disordered. The segment covering Lys23 to Arg35 has biased composition (basic residues). Acidic residues predominate over residues Pro42–Ala51. Phosphoserine is present on Ser50. The segment at Glu157–Pro185 adopts a C3H1-type 1 zinc-finger fold. The RRM domain occupies Pro189–Val295. The C3H1-type 2 zinc finger occupies Arg297–Arg324. The segment at Met339–Thr428 is disordered. The residue at position 340 (Ser340) is a Phosphoserine. A compositionally biased stretch (basic and acidic residues) spans Asn351–Ser366. A compositionally biased stretch (low complexity) spans Lys367–His377. Position 375 is a phosphoserine (Ser375). Over residues Ser389–Arg410 the composition is skewed to basic residues. Residues Pro419–Thr428 show a composition bias toward polar residues.

As to quaternary structure, interacts with SF3B1. Interacts with ZCRB1. In terms of tissue distribution, highest expression levels are detected in the brain, and lower expression levels in other tissues like epididymis, testis, bone marrow or muscle. In testis, expressed in both Sertoli and spermatogenic cell.

Its subcellular location is the nucleus. Plays a role in splicing of the U12-type introns. Implicated also in removal of U2 introns positioned adjacent to a U12 intron. The chain is U2 small nuclear ribonucleoprotein auxiliary factor 35 kDa subunit-related protein 2-like from Mus musculus (Mouse).